Reading from the N-terminus, the 288-residue chain is Small ribosomal subunit protein uS2 (288 aa).

Positions 228 to 288 (RAGLSSDKDA…PAAEAPSTEA (61 aa)) are disordered. Residues 257-288 (QAAPAAEAAPAAEAQAAPAAEAPAAEAPSTEA) are compositionally biased toward low complexity.

It belongs to the universal ribosomal protein uS2 family.

In Rhodococcus opacus (strain B4), this protein is Small ribosomal subunit protein uS2.